The following is a 135-amino-acid chain: ATP synthase epsilon chain (135 aa).

Basic and acidic residues predominate over residues 90 to 103 (DVRRAESAKERAES). The tract at residues 90-115 (DVRRAESAKERAESHLNNNDEDTDIN) is disordered.

The protein belongs to the ATPase epsilon chain family. F-type ATPases have 2 components, CF(1) - the catalytic core - and CF(0) - the membrane proton channel. CF(1) has five subunits: alpha(3), beta(3), gamma(1), delta(1), epsilon(1). CF(0) has three main subunits: a, b and c.

It is found in the cell membrane. Functionally, produces ATP from ADP in the presence of a proton gradient across the membrane. This Staphylococcus carnosus (strain TM300) protein is ATP synthase epsilon chain.